The primary structure comprises 332 residues: Leucine carboxyl methyltransferase 1 (332 aa).

The disordered stretch occupies residues 1 to 23 (MAASLRRPSFTTCSSPTDTDDEG). S-adenosyl-L-methionine contacts are provided by residues R71, G96, D120, 169–170 (DL), and E196.

This sequence belongs to the methyltransferase superfamily. LCMT family.

The enzyme catalyses [phosphatase 2A protein]-C-terminal L-leucine + S-adenosyl-L-methionine = [phosphatase 2A protein]-C-terminal L-leucine methyl ester + S-adenosyl-L-homocysteine. Its function is as follows. Methylates the carboxyl group of the C-terminal leucine residue of protein phosphatase 2A catalytic subunits to form alpha-leucine ester residues. The protein is Leucine carboxyl methyltransferase 1 (LCMT1) of Bos taurus (Bovine).